The sequence spans 257 residues: 1-(5-phosphoribosyl)-5-[(5-phosphoribosylamino)methylideneamino] imidazole-4-carboxamide isomerase (257 aa).

The Proton acceptor role is filled by Asp-8. Catalysis depends on Asp-129, which acts as the Proton donor.

This sequence belongs to the HisA/HisF family.

The protein resides in the cytoplasm. It carries out the reaction 1-(5-phospho-beta-D-ribosyl)-5-[(5-phospho-beta-D-ribosylamino)methylideneamino]imidazole-4-carboxamide = 5-[(5-phospho-1-deoxy-D-ribulos-1-ylimino)methylamino]-1-(5-phospho-beta-D-ribosyl)imidazole-4-carboxamide. It participates in amino-acid biosynthesis; L-histidine biosynthesis; L-histidine from 5-phospho-alpha-D-ribose 1-diphosphate: step 4/9. This chain is 1-(5-phosphoribosyl)-5-[(5-phosphoribosylamino)methylideneamino] imidazole-4-carboxamide isomerase, found in Crocosphaera subtropica (strain ATCC 51142 / BH68) (Cyanothece sp. (strain ATCC 51142)).